The primary structure comprises 158 residues: NAD(P)H-quinone oxidoreductase subunit J, chloroplastic (158 aa).

This sequence belongs to the complex I 30 kDa subunit family. NDH is composed of at least 16 different subunits, 5 of which are encoded in the nucleus.

It is found in the plastid. Its subcellular location is the chloroplast thylakoid membrane. It carries out the reaction a plastoquinone + NADH + (n+1) H(+)(in) = a plastoquinol + NAD(+) + n H(+)(out). The enzyme catalyses a plastoquinone + NADPH + (n+1) H(+)(in) = a plastoquinol + NADP(+) + n H(+)(out). NDH shuttles electrons from NAD(P)H:plastoquinone, via FMN and iron-sulfur (Fe-S) centers, to quinones in the photosynthetic chain and possibly in a chloroplast respiratory chain. The immediate electron acceptor for the enzyme in this species is believed to be plastoquinone. Couples the redox reaction to proton translocation, and thus conserves the redox energy in a proton gradient. This chain is NAD(P)H-quinone oxidoreductase subunit J, chloroplastic, found in Oenothera argillicola (Appalachian evening primrose).